Reading from the N-terminus, the 545-residue chain is Glucose-6-phosphate isomerase (545 aa).

The Proton donor role is filled by glutamate 351. Residues histidine 382 and lysine 510 contribute to the active site.

It belongs to the GPI family.

It localises to the cytoplasm. It catalyses the reaction alpha-D-glucose 6-phosphate = beta-D-fructose 6-phosphate. It participates in carbohydrate biosynthesis; gluconeogenesis. It functions in the pathway carbohydrate degradation; glycolysis; D-glyceraldehyde 3-phosphate and glycerone phosphate from D-glucose: step 2/4. In terms of biological role, catalyzes the reversible isomerization of glucose-6-phosphate to fructose-6-phosphate. This Shewanella baltica (strain OS223) protein is Glucose-6-phosphate isomerase.